The chain runs to 284 residues: D-tagatose-1,6-bisphosphate aldolase subunit GatY (284 aa).

The active-site Proton donor is the Asp82. Residues His83 and His180 each coordinate Zn(2+). Gly181 lines the dihydroxyacetone phosphate pocket. Residue His208 participates in Zn(2+) binding. Residues 209–211 (GAS) and 230–233 (NVAT) contribute to the dihydroxyacetone phosphate site.

This sequence belongs to the class II fructose-bisphosphate aldolase family. TagBP aldolase GatY subfamily. Forms a complex with GatZ. The cofactor is Zn(2+).

It carries out the reaction D-tagatofuranose 1,6-bisphosphate = D-glyceraldehyde 3-phosphate + dihydroxyacetone phosphate. It participates in carbohydrate metabolism; D-tagatose 6-phosphate degradation; D-glyceraldehyde 3-phosphate and glycerone phosphate from D-tagatose 6-phosphate: step 2/2. In terms of biological role, catalytic subunit of the tagatose-1,6-bisphosphate aldolase GatYZ, which catalyzes the reversible aldol condensation of dihydroxyacetone phosphate (DHAP or glycerone-phosphate) with glyceraldehyde 3-phosphate (G3P) to produce tagatose 1,6-bisphosphate (TBP). Requires GatZ subunit for full activity and stability. Is involved in the catabolism of galactitol. The sequence is that of D-tagatose-1,6-bisphosphate aldolase subunit GatY from Salmonella paratyphi B (strain ATCC BAA-1250 / SPB7).